The primary structure comprises 44 residues: Somatoliberin (44 aa).

A Leucine amide modification is found at Leu-44.

The protein belongs to the glucagon family.

The protein localises to the secreted. Its function is as follows. GRF is released by the hypothalamus and acts on the adenohypophyse to stimulate the secretion of growth hormone. The polypeptide is Somatoliberin (GHRH) (Capra hircus (Goat)).